The primary structure comprises 236 residues: Ubiquinone biosynthesis O-methyltransferase (236 aa).

S-adenosyl-L-methionine-binding residues include Arg36, Gly60, Asp81, and Leu123.

This sequence belongs to the methyltransferase superfamily. UbiG/COQ3 family.

The enzyme catalyses a 3-demethylubiquinol + S-adenosyl-L-methionine = a ubiquinol + S-adenosyl-L-homocysteine + H(+). The catalysed reaction is a 3-(all-trans-polyprenyl)benzene-1,2-diol + S-adenosyl-L-methionine = a 2-methoxy-6-(all-trans-polyprenyl)phenol + S-adenosyl-L-homocysteine + H(+). The protein operates within cofactor biosynthesis; ubiquinone biosynthesis. O-methyltransferase that catalyzes the 2 O-methylation steps in the ubiquinone biosynthetic pathway. The polypeptide is Ubiquinone biosynthesis O-methyltransferase (Rickettsia canadensis (strain McKiel)).